A 161-amino-acid chain; its full sequence is Peroxynitrite isomerase (161 aa).

A GXWXGXG motif is present at residues 17 to 23; that stretch reads GSWVGRG. Histidine 152 contacts heme b.

It belongs to the nitrobindin family. As to quaternary structure, homodimer. The cofactor is heme b.

The enzyme catalyses peroxynitrite = nitrate. It participates in nitrogen metabolism. Its function is as follows. Heme-binding protein able to scavenge peroxynitrite and to protect free L-tyrosine against peroxynitrite-mediated nitration, by acting as a peroxynitrite isomerase that converts peroxynitrite to nitrate. Therefore, this protein likely plays a role in peroxynitrite sensing and in the detoxification of reactive nitrogen and oxygen species (RNS and ROS, respectively). Is able to bind nitric oxide (NO) in vitro, but may act as a sensor of peroxynitrite levels in vivo. The polypeptide is Peroxynitrite isomerase (Mycobacterium leprae (strain TN)).